The sequence spans 129 residues: Large ribosomal subunit protein bL21 (129 aa).

The interval 102-129 (TDNAKPTKGPRPKKEKVAKEATKEDAAA) is disordered. Over residues 116–129 (EKVAKEATKEDAAA) the composition is skewed to basic and acidic residues.

This sequence belongs to the bacterial ribosomal protein bL21 family. As to quaternary structure, part of the 50S ribosomal subunit. Contacts protein L20.

In terms of biological role, this protein binds to 23S rRNA in the presence of protein L20. This is Large ribosomal subunit protein bL21 from Bradyrhizobium diazoefficiens (strain JCM 10833 / BCRC 13528 / IAM 13628 / NBRC 14792 / USDA 110).